The chain runs to 326 residues: Glycerol-3-phosphate dehydrogenase [NAD(P)+] (326 aa).

NADPH is bound by residues Ser-10, Phe-11, Arg-31, and Lys-108. Sn-glycerol 3-phosphate contacts are provided by Lys-108, Gly-136, and Ser-138. Residue Ala-140 coordinates NADPH. 5 residues coordinate sn-glycerol 3-phosphate: Lys-191, Asp-246, Ser-256, Arg-257, and Asn-258. The active-site Proton acceptor is Lys-191. Arg-257 is an NADPH binding site. NADPH-binding residues include Ile-281 and Glu-283.

The protein belongs to the NAD-dependent glycerol-3-phosphate dehydrogenase family.

It is found in the cytoplasm. The catalysed reaction is sn-glycerol 3-phosphate + NAD(+) = dihydroxyacetone phosphate + NADH + H(+). It catalyses the reaction sn-glycerol 3-phosphate + NADP(+) = dihydroxyacetone phosphate + NADPH + H(+). Its pathway is membrane lipid metabolism; glycerophospholipid metabolism. Its function is as follows. Catalyzes the reduction of the glycolytic intermediate dihydroxyacetone phosphate (DHAP) to sn-glycerol 3-phosphate (G3P), the key precursor for phospholipid synthesis. The chain is Glycerol-3-phosphate dehydrogenase [NAD(P)+] from Ehrlichia chaffeensis (strain ATCC CRL-10679 / Arkansas).